The chain runs to 178 residues: Large ribosomal subunit protein uL10 (178 aa).

The protein belongs to the universal ribosomal protein uL10 family. In terms of assembly, part of the ribosomal stalk of the 50S ribosomal subunit. The N-terminus interacts with L11 and the large rRNA to form the base of the stalk. The C-terminus forms an elongated spine to which L12 dimers bind in a sequential fashion forming a multimeric L10(L12)X complex.

Forms part of the ribosomal stalk, playing a central role in the interaction of the ribosome with GTP-bound translation factors. The protein is Large ribosomal subunit protein uL10 of Stenotrophomonas maltophilia (strain R551-3).